The sequence spans 566 residues: 5'-AMP-activated protein kinase subunit gamma-2 (566 aa).

Residues 1 to 198 (MGSAAMDTKK…SRIYASSSPP (198 aa)) form a disordered region. The span at 15–25 (SSPGGSSGKKN) shows a compositional bias: low complexity. Residues 54–64 (NSEKHSSRKVD) are compositionally biased toward basic and acidic residues. Ser-65, Ser-71, Ser-73, Ser-90, Ser-138, Ser-143, Ser-158, Ser-161, and Ser-162 each carry phosphoserine. Low complexity-rich tracts occupy residues 132-144 (KESS…STSP) and 156-172 (TSSV…VTKQ). Thr-165 bears the Phosphothreonine mark. Residues 180–189 (YKQEPERPES) show a composition bias toward basic and acidic residues. At Ser-196 the chain carries Phosphoserine. 3 consecutive CBS domains span residues 272-332 (PTSS…KSPM), 354-412 (TFKP…MSDM), and 427-489 (IGTY…NLDI). Residues Arg-299, 314 to 319 (MLTITD), Val-359, 380 to 381 (HR), and Lys-399 contribute to the ADP site. Residues Arg-299, 314 to 319 (MLTITD), Val-359, His-380, 380 to 381 (HR), Lys-399, Thr-429, Ala-434, 455 to 456 (SA), 471 to 474 (SKFD), Arg-498, His-527, 527 to 528 (HR), and 543 to 546 (SLSD) contribute to the AMP site. Residues Arg-299, 314-319 (MLTITD), Val-359, 380-381 (HR), Arg-381, and Lys-399 each bind ATP. Residues 367–388 (LFDAVYSLIKNKIHRLPVIDPI) carry the AMPK pseudosubstrate motif. ADP is bound by residues 471–474 (SKFD), Arg-498, and 527–528 (HR). ATP contacts are provided by residues 471–474 (SKFD), Arg-498, and 527–528 (HR). Residues 501–559 (YFEGVVKCSKLETLETIVDRIVRAEVHRLVVVNEADSIVGIISLSDILQALILTPAGAK) enclose the CBS 4 domain.

This sequence belongs to the 5'-AMP-activated protein kinase gamma subunit family. In terms of assembly, AMPK is a heterotrimer of an alpha catalytic subunit (PRKAA1 or PRKAA2), a beta (PRKAB1 or PRKAB2) and a gamma non-catalytic subunits (PRKAG1, PRKAG2 or PRKAG3). Interacts with FNIP1 and FNIP2. Phosphorylated by ULK1; leading to negatively regulate AMPK activity and suggesting the existence of a regulatory feedback loop between ULK1 and AMPK. In terms of processing, glycosylated; O-GlcNAcylated by OGT, promoting the AMP-activated protein kinase (AMPK) activity.

Its function is as follows. AMP/ATP-binding subunit of AMP-activated protein kinase (AMPK), an energy sensor protein kinase that plays a key role in regulating cellular energy metabolism. In response to reduction of intracellular ATP levels, AMPK activates energy-producing pathways and inhibits energy-consuming processes: inhibits protein, carbohydrate and lipid biosynthesis, as well as cell growth and proliferation. AMPK acts via direct phosphorylation of metabolic enzymes, and by longer-term effects via phosphorylation of transcription regulators. Also acts as a regulator of cellular polarity by remodeling the actin cytoskeleton; probably by indirectly activating myosin. Gamma non-catalytic subunit mediates binding to AMP, ADP and ATP, leading to activate or inhibit AMPK: AMP-binding results in allosteric activation of alpha catalytic subunit (PRKAA1 or PRKAA2) both by inducing phosphorylation and preventing dephosphorylation of catalytic subunits. ADP also stimulates phosphorylation, without stimulating already phosphorylated catalytic subunit. ATP promotes dephosphorylation of catalytic subunit, rendering the AMPK enzyme inactive. The chain is 5'-AMP-activated protein kinase subunit gamma-2 (Prkag2) from Mus musculus (Mouse).